Consider the following 821-residue polypeptide: Integrator complex assembly factor BRAT1 (821 aa).

The tract at residues 100–200 is required for interaction with NDFIP1; that stretch reads PGLFGEPGPL…WPACAQKIMD (101 aa). 2 HEAT repeats span residues 495–531 and 544–576; these read PQFL…SRHW and SEVP…SSQG. Residues 741 to 767 form a disordered region; it reads GSPNTASAEATLPRWRAGEQAQPPGDQ. S742 bears the Phosphoserine mark. The short motif at 819–821 is the BRAT1-like motif element; that stretch reads DCY. A Zn(2+)-binding site is contributed by C820.

Belongs to the BRAT1 family. Part of the multiprotein complex composed of BRAT1, WDR73, as well as integrator complex subunits INTS9 and INTS11. Interacts with BRCA1 and ATM. Interacts with MTOR and RPTOR. Interacts with NDFIP1. Interacts with SMC1A and PRKDC. Post-translationally, ubiquitinated by NEDD4, NEDD4L and ITCH; mono- and polyubiquitinated forms are detected. In terms of tissue distribution, ubiquitously expressed.

It is found in the nucleus. The protein localises to the cytoplasm. Functionally, component of a multiprotein complex required for the assembly of the RNA endonuclease module of the integrator complex. Associates with INTS9 and INTS11 in the cytoplasm and blocks the active site of INTS11 to inhibit the endonuclease activity of INTS11 before formation of the full integrator complex. Following dissociation of WDR73 of the complex, BRAT1 facilitates the nuclear import of the INTS9-INTS11 heterodimer. In the nucleus, INTS4 is integrated to the INTS9-INTS11 heterodimer and BRAT1 is released from the mature RNA endonuclease module by inositol hexakisphosphate (InsP6). BRAT1 is also involved in DNA damage response; activates kinases ATM, SMC1A and PRKDC by modulating their phosphorylation status following ionizing radiation (IR) stress. Plays a role in regulating mitochondrial function and cell proliferation. Required for protein stability of MTOR and MTOR-related proteins, and cell cycle progress by growth factors. This chain is Integrator complex assembly factor BRAT1, found in Homo sapiens (Human).